The sequence spans 278 residues: NAD-capped RNA hydrolase NudC (278 aa).

Arginine 84 lines the substrate pocket. Residues cysteine 114 and cysteine 117 each coordinate Zn(2+). Glutamate 127 is a substrate binding site. Zn(2+) is bound at residue cysteine 132. Tyrosine 140 contacts substrate. Residues proline 141–tyrosine 264 enclose the Nudix hydrolase domain. A divalent metal cation contacts are provided by alanine 174, glutamate 190, and glutamate 194. The Nudix box motif lies at glycine 175 to glutamine 196. Glutamine 208–serine 215 contributes to the substrate binding site. Position 235 (glutamate 235) interacts with a divalent metal cation. Alanine 257 provides a ligand contact to substrate.

The protein belongs to the Nudix hydrolase family. NudC subfamily. In terms of assembly, homodimer. Requires Mg(2+) as cofactor. The cofactor is Mn(2+). It depends on Zn(2+) as a cofactor.

The enzyme catalyses a 5'-end NAD(+)-phospho-ribonucleoside in mRNA + H2O = a 5'-end phospho-adenosine-phospho-ribonucleoside in mRNA + beta-nicotinamide D-ribonucleotide + 2 H(+). It catalyses the reaction NAD(+) + H2O = beta-nicotinamide D-ribonucleotide + AMP + 2 H(+). It carries out the reaction NADH + H2O = reduced beta-nicotinamide D-ribonucleotide + AMP + 2 H(+). MRNA decapping enzyme that specifically removes the nicotinamide adenine dinucleotide (NAD) cap from a subset of mRNAs by hydrolyzing the diphosphate linkage to produce nicotinamide mononucleotide (NMN) and 5' monophosphate mRNA. The NAD-cap is present at the 5'-end of some mRNAs and stabilizes RNA against 5'-processing. Has preference for mRNAs with a 5'-end purine. Catalyzes the hydrolysis of a broad range of dinucleotide pyrophosphates. In Pseudomonas syringae pv. syringae (strain B728a), this protein is NAD-capped RNA hydrolase NudC.